The sequence spans 1523 residues: WD repeat-containing protein 62 (1523 aa).

An N-acetylalanine modification is found at alanine 2. Serine 33 bears the Phosphoserine mark. Threonine 46 bears the Phosphothreonine mark. 12 WD repeats span residues 109 to 150 (TTRK…QVAE), 153 to 194 (GHKY…VVAS), 196 to 234 (KVSC…EAKV), 291 to 330 (INLK…YLTN), 357 to 396 (AVYP…EVSK), 411 to 450 (EVYP…DTRW), 490 to 529 (DMKA…ELIK), 532 to 574 (AHDA…NLEQ), 578 to 618 (DHSS…DGLH), 626 to 665 (AEKT…QKKC), 671 to 713 (GDEG…KMFG), and 714 to 752 (HSEI…TTCM). Phosphoserine is present on serine 501. Residues 762–824 (QEQQQQPKDQ…PSKDSLDPDP (63 aa)) form a disordered region. The segment covering 776–790 (PPSQETYASTPSEIR) has biased composition (polar residues). Over residues 797-809 (QTEDEMEEECEPE) the composition is skewed to acidic residues. Residues 803 to 846 (EEECEPEELLKTPSKDSLDPDPRCLLTNGKLPLWAKRLLGDDDV) form a WD 13 repeat. The span at 810–824 (ELLKTPSKDSLDPDP) shows a compositional bias: basic and acidic residues. 2 positions are modified to phosphoserine: serine 966 and serine 972. A disordered region spans residues 1000 to 1072 (VSSVSSKDQS…GLGNGSLPQT (73 aa)). The residue at position 1072 (threonine 1072) is a Phosphothreonine. A phosphoserine mark is found at serine 1117, serine 1143, and serine 1169. The disordered stretch occupies residues 1143-1258 (SPEAQPVGQG…SLHKPLSPGQ (116 aa)). Composition is skewed to polar residues over residues 1167–1177 (YMSSDGTNVLS) and 1199–1213 (TSVL…ISAP). Positions 1214 to 1225 (SSCSYLESTTSS) are enriched in low complexity. Polar residues predominate over residues 1226-1235 (HAKTTRSISL). At serine 1234 the chain carries Phosphoserine.

As to quaternary structure, can form homodimers (via C-terminus). Interacts (via C-terminus) with MAPKBP1 (via C-terminus). Interacts with CDK5RAP2, CEP152, CEP63 and KIAA0753. CEP63, CDK5RAP2, CEP152, WDR62 are proposed to form a stepwise assembled complex at the centrosome forming a ring near parental centrioles. As to expression, prominent in neural crest lineages from 9.5 dpc to 11.5 dpc. Also expressed in the ventricular and subventricular zones during the period of cerebral cortical neurogenesis (11.5-16.5 dpc), with expression decreasing in intensity by 17.5 dpc. In the cerebellum, it is strongly expressed in precursors of granule neurons at late embryonic and early postnatal stages; by postnatal day 9 (P9). Present in fetal brain, enriched within the ventricular and subventricular zone (at protein level).

The protein localises to the nucleus. The protein resides in the cytoplasm. Its subcellular location is the cytoskeleton. It is found in the spindle pole. It localises to the microtubule organizing center. The protein localises to the centrosome. The protein resides in the centriole. Functionally, required for cerebral cortical development. Plays a role in neuronal proliferation and migration. Plays a role in mother-centriole-dependent centriole duplication; the function seems also to involve CEP152, CDK5RAP2 and CEP63 through a stepwise assembled complex at the centrosome that recruits CDK2 required for centriole duplication. The chain is WD repeat-containing protein 62 (Wdr62) from Mus musculus (Mouse).